The sequence spans 163 residues: Late embryogenesis abundant protein Dc3 (163 aa).

Disordered regions lie at residues Met-1–Met-117 and Phe-139–Glu-163. Composition is skewed to basic and acidic residues over residues Thr-28 to Asp-56, Gly-67 to Thr-84, and Thr-91 to Thr-113. 6 tandem repeats follow at residues Lys-32 to Glu-42, Met-43 to Glu-53, Lys-65 to Glu-75, Thr-76 to Gly-86, Ala-87 to Glu-97, and Lys-103 to Gly-115. Positions Lys-32–Gly-115 are 6 X 11 AA approximate repeats. Low complexity predominate over residues Thr-152–Glu-163.

It belongs to the LEA type 4 family.

In Daucus carota (Wild carrot), this protein is Late embryogenesis abundant protein Dc3.